The chain runs to 446 residues: MKQFEVNFDGLVGPTHNYAGLSYGNVASLNNASAQSSPKQAAKQGLKKMKALADLGMIQGVLAPQARPDVDALRRLGFSGSDANVLQQAAKQAPAIFQACCSASSMWTANAATVSPSADTADGKVHFTPANLTNKYHRSLEPQVTGNILKATFANQQYFSHHNHLPDNEHFGDEGAANHTRLCREYGERGVELFVYGRYAFDKSKPAPVKFPARQTFEASQAVARLHGLSDDNVVFIQQNPDLIDQGVFHNDVISVGNQNVLFYHEQAFLDTDKAFAEIKQKYGAGDLHFIKVITEQVSLQDAIKSYLFNTQLVTLANGEMAIIAPTDCEENPAVSAYLNELVSLNTPIKHIRYYDVKQSMRNGGGPACLRLRVAMNETELAAVNQSTMMNDAQFERLNNWVDKHYRDRLSVDDLRDVALLNESRTALDELTQLLKLGSVYPFQKV.

Substrate is bound by residues 19-28, N110, and 137-138; these read AGLSYGNVAS and HR. The active site involves E174. Residue R214 coordinates substrate. H250 is a catalytic residue. 2 residues coordinate substrate: D252 and N363. The active-site Nucleophile is the C369.

Belongs to the succinylarginine dihydrolase family. In terms of assembly, homodimer.

The catalysed reaction is N(2)-succinyl-L-arginine + 2 H2O + 2 H(+) = N(2)-succinyl-L-ornithine + 2 NH4(+) + CO2. It participates in amino-acid degradation; L-arginine degradation via AST pathway; L-glutamate and succinate from L-arginine: step 2/5. In terms of biological role, catalyzes the hydrolysis of N(2)-succinylarginine into N(2)-succinylornithine, ammonia and CO(2). This is N-succinylarginine dihydrolase from Pseudoalteromonas atlantica (strain T6c / ATCC BAA-1087).